Here is a 344-residue protein sequence, read N- to C-terminus: BURP domain-containing protein 16 (344 aa).

The N-terminal stretch at 1 to 25 (MATSFLFSLILLLITALSLPFPLHA) is a signal peptide. Residues Asn90, Asn120, Asn181, and Asn333 are each glycosylated (N-linked (GlcNAc...) asparagine). The BURP domain maps to 128–341 (FFREQELKEG…FNGSMTWVIA (214 aa)).

As to expression, expressed in roots, stems, leaves and panicles.

This chain is BURP domain-containing protein 16 (BURP16), found in Oryza sativa subsp. japonica (Rice).